The following is a 199-amino-acid chain: Putative peroxiredoxin ycf42 (199 aa).

A Thioredoxin domain is found at 8-165; that stretch reads LQVGQIAPDF…TLRVLQAIQY (158 aa). Residue Cys-53 is the Cysteine sulfenic acid (-SOH) intermediate of the active site.

It belongs to the peroxiredoxin family. AhpC/Prx1 subfamily. As to quaternary structure, homodimer; disulfide-linked, upon oxidation. In terms of processing, the Cys-53-SH group is the primary site of oxidation by H(2)O(2), and the oxidized Cys-53 (probably Cys-SOH) rapidly reacts with Cys-174-SH of the other subunit to form an intermolecular disulfide. This disulfide is subsequently reduced by thioredoxin.

The protein localises to the plastid. The protein resides in the chloroplast. The enzyme catalyses a hydroperoxide + [thioredoxin]-dithiol = an alcohol + [thioredoxin]-disulfide + H2O. Functionally, thiol-specific peroxidase that catalyzes the reduction of hydrogen peroxide and organic hydroperoxides to water and alcohols, respectively. Plays a role in cell protection against oxidative stress by detoxifying peroxides. This is Putative peroxiredoxin ycf42 (ycf42) from Porphyra purpurea (Red seaweed).